Consider the following 123-residue polypeptide: Holo-[acyl-carrier-protein] synthase (123 aa).

D9 and E57 together coordinate Mg(2+).

Belongs to the P-Pant transferase superfamily. AcpS family. Requires Mg(2+) as cofactor.

Its subcellular location is the cytoplasm. It carries out the reaction apo-[ACP] + CoA = holo-[ACP] + adenosine 3',5'-bisphosphate + H(+). Transfers the 4'-phosphopantetheine moiety from coenzyme A to a Ser of acyl-carrier-protein. This Streptomyces avermitilis (strain ATCC 31267 / DSM 46492 / JCM 5070 / NBRC 14893 / NCIMB 12804 / NRRL 8165 / MA-4680) protein is Holo-[acyl-carrier-protein] synthase.